The sequence spans 299 residues: Tetrahydromethanopterin S-methyltransferase subunit E (299 aa).

6 helical membrane-spanning segments follow: residues 57–77 (AISG…SVAW), 80–100 (INAG…AAIV), 133–153 (IGPI…AAYL), 158–178 (LGNP…VGAI), 237–257 (GLCF…GNII), and 261–281 (LVTK…AAMI).

Belongs to the MtrE family. In terms of assembly, the complex is composed of 8 subunits; MtrA, MtrB, MtrC, MtrD, MtrE, MtrF, MtrG and MtrH.

The protein resides in the cell membrane. It catalyses the reaction 5-methyl-5,6,7,8-tetrahydromethanopterin + coenzyme M + 2 Na(+)(in) = 5,6,7,8-tetrahydromethanopterin + methyl-coenzyme M + 2 Na(+)(out). The protein operates within one-carbon metabolism; methanogenesis from CO(2); methyl-coenzyme M from 5,10-methylene-5,6,7,8-tetrahydromethanopterin: step 2/2. Functionally, part of a complex that catalyzes the formation of methyl-coenzyme M and tetrahydromethanopterin from coenzyme M and methyl-tetrahydromethanopterin. This is an energy-conserving, sodium-ion translocating step. The sequence is that of Tetrahydromethanopterin S-methyltransferase subunit E from Methanococcus vannielii (strain ATCC 35089 / DSM 1224 / JCM 13029 / OCM 148 / SB).